Here is a 432-residue protein sequence, read N- to C-terminus: Adenosylhomocysteinase (432 aa).

Substrate contacts are provided by Thr56, Asp131, and Glu156. NAD(+) is bound at residue 157–159 (TTT). Positions 186 and 190 each coordinate substrate. Residues Asn191, 222–227 (GDVGKG), Glu243, 299–301 (IGH), and Asn346 contribute to the NAD(+) site.

This sequence belongs to the adenosylhomocysteinase family. NAD(+) is required as a cofactor.

The enzyme catalyses S-adenosyl-L-homocysteine + H2O = L-homocysteine + adenosine. It participates in amino-acid biosynthesis; L-homocysteine biosynthesis; L-homocysteine from S-adenosyl-L-homocysteine: step 1/1. Adenosylhomocysteine is a competitive inhibitor of S-adenosyl-L-methionine-dependent methyl transferase reactions; therefore adenosylhomocysteinase may play a key role in the control of methylations via regulation of the intracellular concentration of adenosylhomocysteine. This is Adenosylhomocysteinase (Ahcy13) from Anopheles gambiae (African malaria mosquito).